Consider the following 375-residue polypeptide: MSDLRDPAPYDALLLLSFGGPEGPDDVVPFLANVTRGRGIPEERLKEVGQHYFLFGGVSPINEQNRALLGALRKDFADHGLDLPVYWGNRNWAPYLTDVLREMTTDGHRRIAVLATSAYASYSGCRQYRENLAESLAALEAEGLEVPRVDKLRHYFNHPGFVAPMVDGVLASLADLPEDVRAGAHLAFTTHSIPTSAADASGPVEAHGEGGAYVAEHLDVARLIVDAVRAETGIEYPWRLVYQSRSGAPHIPWLEPDICDHLETLGAEGVPAVVMAPIGFVSDHMEVLYDLDTEATAKAAEIGLPVRRSATVGDDPRFAAAVRDLLLERAATERGRAVERCALGSLGPSHDLCPVGCCPARAPKPAAAGADSPYV.

Positions 59 and 128 each coordinate Fe-coproporphyrin III. Residues His191 and Glu286 each coordinate Fe(2+).

This sequence belongs to the ferrochelatase family.

The protein localises to the cytoplasm. It carries out the reaction Fe-coproporphyrin III + 2 H(+) = coproporphyrin III + Fe(2+). It participates in porphyrin-containing compound metabolism; protoheme biosynthesis. Its function is as follows. Involved in coproporphyrin-dependent heme b biosynthesis. Catalyzes the insertion of ferrous iron into coproporphyrin III to form Fe-coproporphyrin III. The polypeptide is Coproporphyrin III ferrochelatase (Streptomyces griseus subsp. griseus (strain JCM 4626 / CBS 651.72 / NBRC 13350 / KCC S-0626 / ISP 5235)).